The primary structure comprises 148 residues: Large ribosomal subunit protein uL15 (148 aa).

Residues 14–54 (HRKKRVGCGEGGGHGKTSGRGGKGQTARSGSSIRPGFEGGQ) are disordered. The span at 21-37 (CGEGGGHGKTSGRGGKG) shows a compositional bias: gly residues.

This sequence belongs to the universal ribosomal protein uL15 family. Part of the 50S ribosomal subunit.

Functionally, binds to the 23S rRNA. This chain is Large ribosomal subunit protein uL15, found in Opitutus terrae (strain DSM 11246 / JCM 15787 / PB90-1).